Reading from the N-terminus, the 426-residue chain is Serine hydroxymethyltransferase 1 (426 aa).

Residues Leu-121 and 125–127 (GHL) each bind (6S)-5,6,7,8-tetrahydrofolate. N6-(pyridoxal phosphate)lysine is present on Lys-230. Residue 355 to 357 (SPF) coordinates (6S)-5,6,7,8-tetrahydrofolate.

Belongs to the SHMT family. Homodimer. The cofactor is pyridoxal 5'-phosphate.

It localises to the cytoplasm. It carries out the reaction (6R)-5,10-methylene-5,6,7,8-tetrahydrofolate + glycine + H2O = (6S)-5,6,7,8-tetrahydrofolate + L-serine. Its pathway is one-carbon metabolism; tetrahydrofolate interconversion. It participates in amino-acid biosynthesis; glycine biosynthesis; glycine from L-serine: step 1/1. Its function is as follows. Catalyzes the reversible interconversion of serine and glycine with tetrahydrofolate (THF) serving as the one-carbon carrier. This reaction serves as the major source of one-carbon groups required for the biosynthesis of purines, thymidylate, methionine, and other important biomolecules. Also exhibits THF-independent aldolase activity toward beta-hydroxyamino acids, producing glycine and aldehydes, via a retro-aldol mechanism. The polypeptide is Serine hydroxymethyltransferase 1 (Hahella chejuensis (strain KCTC 2396)).